The primary structure comprises 644 residues: Alkyldihydroxyacetonephosphate synthase, peroxisomal (644 aa).

The N-terminal 44 residues, 1–44 (MAEAAGEAGASERDPDAVRARRRLRVLSGHLLGRPQEAPSTNEC), are a transit peptide targeting the peroxisome. Residues 1-70 (MAEAAGEAGA…PAAPESGTIP (70 aa)) are disordered. Residues 10-19 (ASERDPDAVR) show a composition bias toward basic and acidic residues. Residues 49-64 (AASAAGASPAASPAAP) show a composition bias toward low complexity. Serine 51 and serine 56 each carry phosphoserine. Position 88 is an N6-acetyllysine (lysine 88). Positions 188–370 (FERIPDIVVW…TEATIKIRPT (183 aa)) constitute an FAD-binding PCMH-type domain. Residues 220-226 (PIGGGTS), 289-295 (DSLEFSI), and 302-305 (TRAS) contribute to the FAD site. Lysine 333 is subject to N6-acetyllysine. 354-360 (EGTLGVI) serves as a coordination point for FAD. Arginine 501 contacts substrate. Residue tyrosine 564 is the Proton donor/acceptor of the active site. Important for enzyme activity stretches follow at residues 601–603 (HHH) and 640–644 (NRNLL).

This sequence belongs to the FAD-binding oxidoreductase/transferase type 4 family. Homodimer. It depends on FAD as a cofactor.

It localises to the peroxisome membrane. The protein resides in the peroxisome. It catalyses the reaction a long chain fatty alcohol + a 1-acylglycerone 3-phosphate = a 1-O-alkylglycerone 3-phosphate + a long-chain fatty acid + H(+). The catalysed reaction is hexadecan-1-ol + 1-hexadecanoylglycerone 3-phosphate = 1-O-hexadecylglycerone 3-phosphate + hexadecanoate + H(+). The enzyme catalyses 1-hexadecanoylglycerone 3-phosphate + a long-chain fatty acid = a 1-acylglycerone 3-phosphate + hexadecanoate. Its pathway is glycerolipid metabolism; ether lipid biosynthesis. Inhibited by divalent cation Mg(2+). In terms of biological role, catalyzes the exchange of the acyl chain in acyl-dihydroxyacetonephosphate (acyl-DHAP) for a long chain fatty alcohol, yielding the first ether linked intermediate, i.e. alkyl-dihydroxyacetonephosphate (alkyl-DHAP), in the pathway of ether lipid biosynthesis. The sequence is that of Alkyldihydroxyacetonephosphate synthase, peroxisomal (Agps) from Rattus norvegicus (Rat).